Consider the following 374-residue polypeptide: Erythronate-4-phosphate dehydrogenase (374 aa).

Positions 53 and 75 each coordinate substrate. D160 is an NAD(+) binding site. The active site involves R222. Residue D246 coordinates NAD(+). The active site involves E251. H268 acts as the Proton donor in catalysis. G271 is an NAD(+) binding site. Y272 serves as a coordination point for substrate.

This sequence belongs to the D-isomer specific 2-hydroxyacid dehydrogenase family. PdxB subfamily. Homodimer.

It localises to the cytoplasm. The enzyme catalyses 4-phospho-D-erythronate + NAD(+) = (R)-3-hydroxy-2-oxo-4-phosphooxybutanoate + NADH + H(+). It functions in the pathway cofactor biosynthesis; pyridoxine 5'-phosphate biosynthesis; pyridoxine 5'-phosphate from D-erythrose 4-phosphate: step 2/5. Its function is as follows. Catalyzes the oxidation of erythronate-4-phosphate to 3-hydroxy-2-oxo-4-phosphonooxybutanoate. The sequence is that of Erythronate-4-phosphate dehydrogenase from Psychrobacter sp. (strain PRwf-1).